The sequence spans 717 residues: Putative amino acid transporter AAT1 (717 aa).

The span at 1–10 (MREGAFDASR) shows a compositional bias: basic and acidic residues. The segment at 1 to 88 (MREGAFDASR…DRAQTDSRQE (88 aa)) is disordered. Residues 16 to 25 (QRPSSLSTAQ) are compositionally biased toward polar residues. Over residues 26 to 53 (PPSDSRPPSSSSPPSSSSSSSSASSSSP) the composition is skewed to low complexity. Over residues 74–88 (SAEKMDRAQTDSRQE) the composition is skewed to basic and acidic residues. The next 8 helical transmembrane spans lie at 124–143 (VLTL…PYAM), 149–170 (LIGL…YILM), 196–216 (AVDA…LVFL), 236–253 (HRAA…PLSV), 265–283 (FFPV…YRSL), 303–320 (FKSF…INVC), 341–358 (AALL…LGYL), and 378–402 (LMHV…IPTV). The disordered stretch occupies residues 462-602 (GDAEYGGAEA…REEREEREGQ (141 aa)). Positions 463-477 (DAEYGGAEAGEATRG) are enriched in low complexity. A compositionally biased stretch (basic and acidic residues) spans 497–519 (ARNRDRSRLHADSERSAGDREGS). Residues 547-558 (GSSSASSRSVDS) show a composition bias toward low complexity. Basic and acidic residues predominate over residues 584 to 602 (SGDREAREEREEREEREGQ). The next 3 helical transmembrane spans lie at 622–638 (VCVA…ALVL), 644–669 (VVGL…YAGI), and 681–702 (LLMV…IIIL).

It belongs to the amino acid/polyamine transporter 2 family.

It localises to the vacuole membrane. Putative amino acid transporter. Probably transports arginine. Involved in maintaining the osmotic homeostasis of the digestive vacuole. Required for extracellular parasite survival and bradyzoite differentiation. In Toxoplasma gondii (strain ATCC 50611 / Me49), this protein is Putative amino acid transporter AAT1.